Here is a 591-residue protein sequence, read N- to C-terminus: Guanylate-binding protein 2 (591 aa).

Positions 1–309 are GTPase domain (Globular); that stretch reads MAPEINLPGP…NAISSGDLPC (309 aa). The 242-residue stretch at 35 to 276 folds into the GB1/RHD3-type G domain; sequence TQPVVVVAIV…FCSYILSHSN (242 aa). GTP contacts are provided by residues 45–52, 181–182, and L245; these read GLYRTGKS and RD. A Cysteine methyl ester modification is found at C588. Residue C588 is the site of S-geranylgeranyl cysteine attachment. Positions 589 to 591 are cleaved as a propeptide — removed in mature form; sequence NIL.

It belongs to the TRAFAC class dynamin-like GTPase superfamily. GB1/RHD3 GTPase family. GB1 subfamily. In terms of assembly, homodimer; homodimerization occurs upon GTP-binding and is required for the association with membranous structures. Heterodimer with other family members, including GBP1, GBP3, GBP4 and GBP5. Post-translationally, (Microbial infection) Ubiquitinated by S.flexneri IpaH9.8, leading to its degradation by the proteasome, thereby preventing its ability to promote host defense against bacterial infection. Isoprenylation is required for proper subcellular location.

The protein resides in the cytoplasmic vesicle membrane. It localises to the golgi apparatus membrane. The protein localises to the cytoplasm. Its subcellular location is the perinuclear region. It catalyses the reaction GTP + H2O = GDP + phosphate + H(+). In terms of biological role, interferon (IFN)-inducible GTPase that plays important roles in innate immunity against a diverse range of bacterial, viral and protozoan pathogens. Hydrolyzes GTP to GMP in 2 consecutive cleavage reactions, but the major reaction product is GDP. Following infection, recruited to the pathogen-containing vacuoles or vacuole-escaped bacteria and acts as a positive regulator of inflammasome assembly by promoting the release of inflammasome ligands from bacteria. Acts by promoting lysis of pathogen-containing vacuoles, releasing pathogens into the cytosol. Following pathogen release in the cytosol, promotes recruitment of proteins that mediate bacterial cytolysis: this liberates ligands that are detected by inflammasomes, such as lipopolysaccharide (LPS) that activates the non-canonical CASP4/CASP11 inflammasome or double-stranded DNA (dsDNA) that activates the AIM2 inflammasome. Confers protection to the protozoan pathogen Toxoplasma gondii. Independently of its GTPase activity, acts as an inhibitor of various viruses infectivity, such as HIV-1, Zika and influenza A viruses, by inhibiting FURIN-mediated maturation of viral envelope proteins. This chain is Guanylate-binding protein 2, found in Homo sapiens (Human).